The primary structure comprises 126 residues: SH2 domain-containing protein 1A (126 aa).

The SH2 domain occupies 6-102; the sequence is VYHGKISREM…GIVTPLQYPV (97 aa). The segment at 67–92 is interaction with FYN SH3 domain; that stretch reads ETAPGVHKRFFRKVKNLISAFQKPDQ. Residue Lys89 is modified to N6-acetyllysine. A disordered region spans residues 100–126; that stretch reads YPVEKSSARSPQAPTGRRDSDICLKAP. Residues 115–126 show a composition bias toward basic and acidic residues; that stretch reads GRRDSDICLKAP. At Ser119 the chain carries Phosphoserine.

As to quaternary structure, interacts with CD84, CD244, LY9, SLAMF1 and FYN. Interacts with NTRK1, NTRK2 and NTRK3.

Its subcellular location is the cytoplasm. In terms of biological role, cytoplasmic adapter regulating receptors of the signaling lymphocytic activation molecule (SLAM) family such as SLAMF1, CD244, LY9, CD84, SLAMF6 and SLAMF7. In SLAM signaling seems to cooperate with SH2D1B/EAT-2. Initially it has been proposed that association with SLAMF1 prevents SLAMF1 binding to inhibitory effectors including INPP5D/SHIP1 and PTPN11/SHP-2. However, by simultaneous interactions, recruits FYN which subsequently phosphorylates and activates SLAMF1. Positively regulates CD244/2B4- and CD84-mediated natural killer (NK) cell functions. Can also promote CD48-, SLAMF6 -, LY9-, and SLAMF7-mediated NK cell activation. In the context of NK cell-mediated cytotoxicity enhances conjugate formation with target cells. May also regulate the activity of the neurotrophin receptors NTRK1, NTRK2 and NTRK3. This is SH2 domain-containing protein 1A (Sh2d1a) from Rattus norvegicus (Rat).